We begin with the raw amino-acid sequence, 209 residues long: Uracil phosphoribosyltransferase (209 aa).

5-phospho-alpha-D-ribose 1-diphosphate contacts are provided by residues R79, R104, and 131 to 139 (DPMLATGNS). Uracil is bound by residues I194 and 199-201 (GDA). D200 is a binding site for 5-phospho-alpha-D-ribose 1-diphosphate.

The protein belongs to the UPRTase family. Mg(2+) is required as a cofactor.

It catalyses the reaction UMP + diphosphate = 5-phospho-alpha-D-ribose 1-diphosphate + uracil. Its pathway is pyrimidine metabolism; UMP biosynthesis via salvage pathway; UMP from uracil: step 1/1. Its activity is regulated as follows. Allosterically activated by GTP. Functionally, catalyzes the conversion of uracil and 5-phospho-alpha-D-ribose 1-diphosphate (PRPP) to UMP and diphosphate. This chain is Uracil phosphoribosyltransferase, found in Agrobacterium fabrum (strain C58 / ATCC 33970) (Agrobacterium tumefaciens (strain C58)).